Reading from the N-terminus, the 963-residue chain is Glycine dehydrogenase (decarboxylating) (963 aa).

Lys710 bears the N6-(pyridoxal phosphate)lysine mark.

Belongs to the GcvP family. The glycine cleavage system is composed of four proteins: P, T, L and H. Pyridoxal 5'-phosphate is required as a cofactor.

It carries out the reaction N(6)-[(R)-lipoyl]-L-lysyl-[glycine-cleavage complex H protein] + glycine + H(+) = N(6)-[(R)-S(8)-aminomethyldihydrolipoyl]-L-lysyl-[glycine-cleavage complex H protein] + CO2. In terms of biological role, the glycine cleavage system catalyzes the degradation of glycine. The P protein binds the alpha-amino group of glycine through its pyridoxal phosphate cofactor; CO(2) is released and the remaining methylamine moiety is then transferred to the lipoamide cofactor of the H protein. In Pseudoalteromonas translucida (strain TAC 125), this protein is Glycine dehydrogenase (decarboxylating).